The chain runs to 317 residues: L-lactate dehydrogenase (317 aa).

Residues valine 17, aspartate 38, lysine 43, tyrosine 69, and 83–84 contribute to the NAD(+) site; that span reads GA. 2 residues coordinate substrate: glutamine 86 and arginine 92. NAD(+)-binding positions include serine 105, 122–124, and serine 147; that span reads ATN. 124–127 is a binding site for substrate; sequence NPVD. 152-155 is a substrate binding site; the sequence is DSAR. The beta-D-fructose 1,6-bisphosphate site is built by arginine 157 and histidine 172. Histidine 179 (proton acceptor) is an active-site residue. Tyrosine 224 is subject to Phosphotyrosine. Residue threonine 233 participates in substrate binding.

It belongs to the LDH/MDH superfamily. LDH family. In terms of assembly, homotetramer.

The protein localises to the cytoplasm. The catalysed reaction is (S)-lactate + NAD(+) = pyruvate + NADH + H(+). Its pathway is fermentation; pyruvate fermentation to lactate; (S)-lactate from pyruvate: step 1/1. Its activity is regulated as follows. Allosterically activated by fructose 1,6-bisphosphate (FBP). Its function is as follows. Catalyzes the conversion of lactate to pyruvate. This Bacillus velezensis (strain DSM 23117 / BGSC 10A6 / LMG 26770 / FZB42) (Bacillus amyloliquefaciens subsp. plantarum) protein is L-lactate dehydrogenase.